Here is a 473-residue protein sequence, read N- to C-terminus: Cysteine--tRNA ligase (473 aa).

Residue cysteine 28 participates in Zn(2+) binding. A 'HIGH' region motif is present at residues proline 30–asparagine 40. Zn(2+) is bound by residues cysteine 210, histidine 235, and glutamate 239. The 'KMSKS' region signature appears at lysine 267–serine 271. Lysine 270 lines the ATP pocket.

Belongs to the class-I aminoacyl-tRNA synthetase family. Monomer. Zn(2+) serves as cofactor.

The protein resides in the cytoplasm. The catalysed reaction is tRNA(Cys) + L-cysteine + ATP = L-cysteinyl-tRNA(Cys) + AMP + diphosphate. The chain is Cysteine--tRNA ligase from Fusobacterium nucleatum subsp. nucleatum (strain ATCC 25586 / DSM 15643 / BCRC 10681 / CIP 101130 / JCM 8532 / KCTC 2640 / LMG 13131 / VPI 4355).